A 270-amino-acid chain; its full sequence is 5'-AMP-activated protein kinase subunit beta-1 (270 aa).

The disordered stretch occupies residues 1-46 (MGNTSSERAALERHGGHKTPRRDSSGGTKDGDRPKILMDSPEDADL). A lipid anchor (N-myristoyl glycine) is attached at glycine 2. Residue threonine 4 is modified to Phosphothreonine. Serine 5 and serine 6 each carry phosphoserine. The residue at position 19 (threonine 19) is a Phosphothreonine. Over residues 21 to 36 (RRDSSGGTKDGDRPKI) the composition is skewed to basic and acidic residues. A phosphoserine; by autocatalysis mark is found at serine 24 and serine 25. Phosphoserine occurs at positions 40, 96, and 101. The glycogen-binding domain stretch occupies residues 68–163 (EVNDKAPAQA…QVKKTDFEVF (96 aa)). Position 108 is a phosphoserine; by autocatalysis (serine 108). Threonine 148 is modified (phosphothreonine). The residue at position 182 (serine 182) is a Phosphoserine.

This sequence belongs to the 5'-AMP-activated protein kinase beta subunit family. AMPK is a heterotrimer of an alpha catalytic subunit (PRKAA1 or PRKAA2), a beta (PRKAB1 or PRKAB2) and a gamma non-catalytic subunits (PRKAG1, PRKAG2 or PRKAG3). Interacts with FNIP1 and FNIP2. In terms of processing, phosphorylated when associated with the catalytic subunit (PRKAA1 or PRKAA2). Phosphorylated by ULK1; leading to negatively regulate AMPK activity and suggesting the existence of a regulatory feedback loop between ULK1 and AMPK.

Its function is as follows. Non-catalytic subunit of AMP-activated protein kinase (AMPK), an energy sensor protein kinase that plays a key role in regulating cellular energy metabolism. In response to reduction of intracellular ATP levels, AMPK activates energy-producing pathways and inhibits energy-consuming processes: inhibits protein, carbohydrate and lipid biosynthesis, as well as cell growth and proliferation. AMPK acts via direct phosphorylation of metabolic enzymes, and by longer-term effects via phosphorylation of transcription regulators. Also acts as a regulator of cellular polarity by remodeling the actin cytoskeleton; probably by indirectly activating myosin. Beta non-catalytic subunit acts as a scaffold on which the AMPK complex assembles, via its C-terminus that bridges alpha (PRKAA1 or PRKAA2) and gamma subunits (PRKAG1, PRKAG2 or PRKAG3). This chain is 5'-AMP-activated protein kinase subunit beta-1 (PRKAB1), found in Pongo abelii (Sumatran orangutan).